The chain runs to 316 residues: Transaldolase A (316 aa).

The active-site Schiff-base intermediate with substrate is lysine 131.

It belongs to the transaldolase family. Type 1 subfamily. Homodimer.

Its subcellular location is the cytoplasm. It catalyses the reaction D-sedoheptulose 7-phosphate + D-glyceraldehyde 3-phosphate = D-erythrose 4-phosphate + beta-D-fructose 6-phosphate. It functions in the pathway carbohydrate degradation; pentose phosphate pathway; D-glyceraldehyde 3-phosphate and beta-D-fructose 6-phosphate from D-ribose 5-phosphate and D-xylulose 5-phosphate (non-oxidative stage): step 2/3. Transaldolase is important for the balance of metabolites in the pentose-phosphate pathway. The chain is Transaldolase A (talA) from Escherichia coli O157:H7.